A 346-amino-acid polypeptide reads, in one-letter code: Upstream stimulatory factor 2 (346 aa).

Disordered stretches follow at residues 1–44 and 215–244; these read MDML…PGAE and APRTHPYSPKIDGTRTPRDERRRAQHNEVE. Low complexity predominate over residues 11–20; it reads AASATAAAAA. Over residues 226–244 the composition is skewed to basic and acidic residues; sequence DGTRTPRDERRRAQHNEVE. The bHLH domain occupies 235 to 290; it reads RRRAQHNEVERRRRDKINNWIVQLSKIIPDCNADNSKTGASKGGILSKACDYIREL. Positions 307–328 are leucine-zipper; that stretch reads LQMDNELLRQQIEELKNENALL.

In terms of assembly, interacts with MAF. Efficient DNA binding requires dimerization with another bHLH protein. Binds DNA as a homodimer or a heterodimer (USF1/USF2). In vivo, the USF1/USF2A heterodimer represents over 66% of the usf binding activity whereas the USF1 and USF2A homodimers represent less than 10%. The USF1/USF2B heterodimer accounted for almost 15% in some cell. In terms of tissue distribution, ubiquitous.

Its subcellular location is the nucleus. Functionally, transcription factor that binds to a symmetrical DNA sequence (E-boxes) (5'-CACGTG-3') that is found in a variety of viral and cellular promoters. The protein is Upstream stimulatory factor 2 (USF2) of Homo sapiens (Human).